A 912-amino-acid polypeptide reads, in one-letter code: Transcription factor bHLH140 (912 aa).

The disordered stretch occupies residues 1 to 57 (MDDFNLRSENPNSSSTTSSSSSSFHRHKSETGNTKRSRSTSTLSTDPQSVAARDRRH). The span at 13-23 (SSSTTSSSSSS) shows a compositional bias: low complexity. Residues 43-92 (LSTDPQSVAARDRRHRISDRFKILQSMVPGGAKMDTVSMLDEAISYVKFL) form the bHLH domain. ATP is bound at residue 234 to 241 (GPPGSGKS). The region spanning 511-690 (KAKASQKNID…KYKGSQDKAV (180 aa)) is the Macro domain. Polar residues predominate over residues 657 to 666 (PKRSSQTAVS). Residues 657–706 (PKRSSQTAVSDSGEDIKEDSERNKKYKGSQDKAVTNNLESESLEDTRGSG) are disordered. The HIT domain occupies 720–829 (LHSIAMHPER…SQDFNSDSLK (110 aa)). A C2H2-type zinc finger spans residues 870 to 893 (LRCNRCRSAHPNIPKLKSHVRSCH).

As to quaternary structure, homodimer.

Its subcellular location is the nucleus. This is Transcription factor bHLH140 (BHLH140) from Arabidopsis thaliana (Mouse-ear cress).